Reading from the N-terminus, the 544-residue chain is CTP synthase (544 aa).

The amidoligase domain stretch occupies residues 1-265; sequence MTQYIFITGG…DDLVVKHFGL (265 aa). Serine 13 is a binding site for CTP. UTP is bound at residue serine 13. ATP contacts are provided by residues 14–19 and aspartate 71; that span reads SLGKGI. Positions 71 and 139 each coordinate Mg(2+). CTP contacts are provided by residues 146–148, 186–191, and lysine 222; these read DIE and KTKPTQ. UTP is bound by residues 186–191 and lysine 222; that span reads KTKPTQ. The Glutamine amidotransferase type-1 domain maps to 290–541; the sequence is TVAMVGKYVN…IAAALDYQTE (252 aa). Glycine 351 contacts L-glutamine. The Nucleophile; for glutamine hydrolysis role is filled by cysteine 378. Residues 379–382, glutamate 402, and arginine 469 each bind L-glutamine; that span reads LGLQ. Catalysis depends on residues histidine 514 and glutamate 516.

The protein belongs to the CTP synthase family. Homotetramer.

The catalysed reaction is UTP + L-glutamine + ATP + H2O = CTP + L-glutamate + ADP + phosphate + 2 H(+). The enzyme catalyses L-glutamine + H2O = L-glutamate + NH4(+). It catalyses the reaction UTP + NH4(+) + ATP = CTP + ADP + phosphate + 2 H(+). The protein operates within pyrimidine metabolism; CTP biosynthesis via de novo pathway; CTP from UDP: step 2/2. With respect to regulation, allosterically activated by GTP, when glutamine is the substrate; GTP has no effect on the reaction when ammonia is the substrate. The allosteric effector GTP functions by stabilizing the protein conformation that binds the tetrahedral intermediate(s) formed during glutamine hydrolysis. Inhibited by the product CTP, via allosteric rather than competitive inhibition. Functionally, catalyzes the ATP-dependent amination of UTP to CTP with either L-glutamine or ammonia as the source of nitrogen. Regulates intracellular CTP levels through interactions with the four ribonucleotide triphosphates. The protein is CTP synthase of Dichelobacter nodosus (strain VCS1703A).